Reading from the N-terminus, the 843-residue chain is Pullulanase (843 aa).

The signal sequence occupies residues 1–19 (MKTKLWLLLVLLLSALIFS). The active-site Nucleophile is the Asp535. Glu564 (proton donor) is an active-site residue.

Belongs to the glycosyl hydrolase 13 family.

The enzyme catalyses Hydrolysis of (1-&gt;6)-alpha-D-glucosidic linkages in pullulan, amylopectin and glycogen, and in the alpha- and beta-limit dextrins of amylopectin and glycogen.. The chain is Pullulanase (pulA) from Thermotoga maritima (strain ATCC 43589 / DSM 3109 / JCM 10099 / NBRC 100826 / MSB8).